A 338-amino-acid chain; its full sequence is Ketol-acid reductoisomerase (NADP(+)) (338 aa).

Residues Met1–Thr181 enclose the KARI N-terminal Rossmann domain. Residues Tyr24 to Gln27, Arg47, and Ser52 contribute to the NADP(+) site. Residue His107 is part of the active site. Residue Gly133 participates in NADP(+) binding. Residues Asn182 to Ile327 form the KARI C-terminal knotted domain. Mg(2+) is bound by residues Asp190, Glu194, Glu226, and Glu230. Ser251 contacts substrate.

It belongs to the ketol-acid reductoisomerase family. Requires Mg(2+) as cofactor.

It catalyses the reaction (2R)-2,3-dihydroxy-3-methylbutanoate + NADP(+) = (2S)-2-acetolactate + NADPH + H(+). It carries out the reaction (2R,3R)-2,3-dihydroxy-3-methylpentanoate + NADP(+) = (S)-2-ethyl-2-hydroxy-3-oxobutanoate + NADPH + H(+). It functions in the pathway amino-acid biosynthesis; L-isoleucine biosynthesis; L-isoleucine from 2-oxobutanoate: step 2/4. It participates in amino-acid biosynthesis; L-valine biosynthesis; L-valine from pyruvate: step 2/4. Functionally, involved in the biosynthesis of branched-chain amino acids (BCAA). Catalyzes an alkyl-migration followed by a ketol-acid reduction of (S)-2-acetolactate (S2AL) to yield (R)-2,3-dihydroxy-isovalerate. In the isomerase reaction, S2AL is rearranged via a Mg-dependent methyl migration to produce 3-hydroxy-3-methyl-2-ketobutyrate (HMKB). In the reductase reaction, this 2-ketoacid undergoes a metal-dependent reduction by NADPH to yield (R)-2,3-dihydroxy-isovalerate. This Methylobacillus flagellatus (strain ATCC 51484 / DSM 6875 / VKM B-1610 / KT) protein is Ketol-acid reductoisomerase (NADP(+)).